Consider the following 312-residue polypeptide: Protein Rep40 (312 aa).

Residues 84–239 (DPQYAASVFL…LDHDFGKVTK (156 aa)) enclose the SF3 helicase domain. 110-117 (GPATTGKT) is an ATP binding site. The tract at residues 264–301 (KGGAKKRPAPSDADISEPKRVRESVAQPSTSDAEASIN) is disordered.

Homooligomer.

It is found in the host nucleus. The catalysed reaction is ATP + H2O = ADP + phosphate + H(+). Plays a critical role during packaging of viral DNA into empty capsids, where they are thought to be part of the packaging motor complex. The single stranded genomic DNA is packaged in a 3' to 5' direction and requires the association of viral DNA with Rep40. This Mammalia (AAV-2) protein is Protein Rep40 (Rep40).